We begin with the raw amino-acid sequence, 240 residues long: Ribonuclease PH (240 aa).

Phosphate contacts are provided by residues Arg87 and 125-127; that span reads GTR.

The protein belongs to the RNase PH family. As to quaternary structure, homohexameric ring arranged as a trimer of dimers.

The enzyme catalyses tRNA(n+1) + phosphate = tRNA(n) + a ribonucleoside 5'-diphosphate. Phosphorolytic 3'-5' exoribonuclease that plays an important role in tRNA 3'-end maturation. Removes nucleotide residues following the 3'-CCA terminus of tRNAs; can also add nucleotides to the ends of RNA molecules by using nucleoside diphosphates as substrates, but this may not be physiologically important. Probably plays a role in initiation of 16S rRNA degradation (leading to ribosome degradation) during starvation. The sequence is that of Ribonuclease PH from Stutzerimonas stutzeri (strain A1501) (Pseudomonas stutzeri).